Here is a 132-residue protein sequence, read N- to C-terminus: Protein NrdI (132 aa).

It belongs to the NrdI family.

Probably involved in ribonucleotide reductase function. The chain is Protein NrdI from Agrobacterium fabrum (strain C58 / ATCC 33970) (Agrobacterium tumefaciens (strain C58)).